Consider the following 288-residue polypeptide: Leucine-rich repeat-containing protein 72 (288 aa).

4 LRR repeats span residues 47–68, 69–90, 91–112, and 113–134; these read DVFE…SRFK, KLKY…TRNY, CLAE…HYLP, and SLHI…VKEL. The LRRCT domain occupies 148–186; the sequence is NPLCQYNLYRLYIIYHLPGVELLDRNQVTEKERRSMITL.

This chain is Leucine-rich repeat-containing protein 72 (LRRC72), found in Bos taurus (Bovine).